Reading from the N-terminus, the 433-residue chain is Phosphomethylpyrimidine synthase 1 (433 aa).

Substrate-binding positions include asparagine 66, methionine 94, tyrosine 123, histidine 162, 184-186 (SRG), 225-228 (DALR), and glutamate 264. A Zn(2+)-binding site is contributed by histidine 268. Tyrosine 291 contributes to the substrate binding site. Histidine 332 is a binding site for Zn(2+). [4Fe-4S] cluster contacts are provided by cysteine 408, cysteine 411, and cysteine 415.

The protein belongs to the ThiC family. [4Fe-4S] cluster is required as a cofactor.

It catalyses the reaction 5-amino-1-(5-phospho-beta-D-ribosyl)imidazole + S-adenosyl-L-methionine = 4-amino-2-methyl-5-(phosphooxymethyl)pyrimidine + CO + 5'-deoxyadenosine + formate + L-methionine + 3 H(+). The protein operates within cofactor biosynthesis; thiamine diphosphate biosynthesis. Functionally, catalyzes the synthesis of the hydroxymethylpyrimidine phosphate (HMP-P) moiety of thiamine from aminoimidazole ribotide (AIR) in a radical S-adenosyl-L-methionine (SAM)-dependent reaction. The sequence is that of Phosphomethylpyrimidine synthase 1 from Saccharolobus solfataricus (strain ATCC 35092 / DSM 1617 / JCM 11322 / P2) (Sulfolobus solfataricus).